The chain runs to 40 residues: Photosystem I reaction center subunit IX (40 aa).

A helical transmembrane segment spans residues Ala12–Phe34.

The protein belongs to the PsaJ family.

The protein resides in the plastid. It is found in the chloroplast thylakoid membrane. In terms of biological role, may help in the organization of the PsaE and PsaF subunits. The chain is Photosystem I reaction center subunit IX from Emiliania huxleyi (Coccolithophore).